The chain runs to 247 residues: uncharacterized protein (247 aa).

Transmembrane regions (helical) follow at residues 9-29 (IIAI…FLIF) and 37-57 (SYFL…SLII).

It localises to the cell membrane. This is an uncharacterized protein from Methanocaldococcus jannaschii (strain ATCC 43067 / DSM 2661 / JAL-1 / JCM 10045 / NBRC 100440) (Methanococcus jannaschii).